A 205-amino-acid chain; its full sequence is Spermatogenesis-associated protein 24 (205 aa).

The stretch at 17–166 (LAFDQLRDVI…QQKQIFRNHM (150 aa)) forms a coiled coil. A required for interaction with CBX5 and TBPL1 region spans residues 138–185 (EDILNGKENEIKELQQVISQQKQIFRNHMSDFRIQKQQESYMAQVLDQ). The tract at residues 180–205 (AQVLDQKHKKASGTRQAHSHQHPREK) is disordered. A compositionally biased stretch (basic residues) spans 186 to 205 (KHKKASGTRQAHSHQHPREK).

Belongs to the SPATA24 family. In terms of assembly, homodimer. Interacts with CBX3, CBX5, GMNN, GTF2B, TBPL1 and the polycomb proteins PHCF2, RNF2 and SCMH1 but not with CBX1 or PCGF2.

The protein localises to the cytoplasm. It is found in the nucleus. The protein resides in the nucleolus. Its subcellular location is the nucleoplasm. Functionally, binds DNA with high affinity but does not bind to TATA boxes. Synergises with GMNN and TBP in activation of TATA box-containing promoters and with GMNN and TBPL1 in activation of the NF1 TATA-less promoter. May play a role in cytoplasm movement and removal during spermiogenesis. The sequence is that of Spermatogenesis-associated protein 24 (SPATA24) from Macaca fascicularis (Crab-eating macaque).